We begin with the raw amino-acid sequence, 131 residues long: Thioredoxin H4-1 (131 aa).

The region spanning Ser3–Asp129 is the Thioredoxin domain. Active-site nucleophile residues include Cys55 and Cys58. Cysteines 55 and 58 form a disulfide.

The protein belongs to the thioredoxin family. Plant H-type subfamily.

The protein localises to the cytoplasm. Its function is as follows. Probable thiol-disulfide oxidoreductase that may be involved in the redox regulation of a number of cytosolic enzymes. This is Thioredoxin H4-1 from Oryza sativa subsp. japonica (Rice).